The chain runs to 213 residues: A-type ATP synthase subunit D (213 aa).

Belongs to the V-ATPase D subunit family. Has multiple subunits with at least A(3), B(3), C, D, E, F, H, I and proteolipid K(x).

The protein localises to the cell membrane. Its function is as follows. Component of the A-type ATP synthase that produces ATP from ADP in the presence of a proton gradient across the membrane. The protein is A-type ATP synthase subunit D of Saccharolobus islandicus (strain L.S.2.15 / Lassen #1) (Sulfolobus islandicus).